A 248-amino-acid chain; its full sequence is Triosephosphate isomerase (248 aa).

Substrate contacts are provided by Asn11 and Lys13. His95 functions as the Electrophile in the catalytic mechanism. Glu165 functions as the Proton acceptor in the catalytic mechanism.

This sequence belongs to the triosephosphate isomerase family. As to quaternary structure, homodimer.

The protein resides in the cytoplasm. The enzyme catalyses dihydroxyacetone phosphate = methylglyoxal + phosphate. It carries out the reaction D-glyceraldehyde 3-phosphate = dihydroxyacetone phosphate. Its pathway is carbohydrate degradation; glycolysis; D-glyceraldehyde 3-phosphate from glycerone phosphate: step 1/1. It participates in carbohydrate biosynthesis; gluconeogenesis. In terms of biological role, triosephosphate isomerase is an extremely efficient metabolic enzyme that catalyzes the interconversion between dihydroxyacetone phosphate (DHAP) and D-glyceraldehyde-3-phosphate (G3P) in glycolysis and gluconeogenesis. Functionally, it is also responsible for the non-negligible production of methylglyoxal a reactive cytotoxic side-product that modifies and can alter proteins, DNA and lipids. The chain is Triosephosphate isomerase (tpi1) from Xenopus tropicalis (Western clawed frog).